Consider the following 370-residue polypeptide: UDP-N-acetylglucosamine--N-acetylmuramyl-(pentapeptide) pyrophosphoryl-undecaprenol N-acetylglucosamine transferase (370 aa).

UDP-N-acetyl-alpha-D-glucosamine is bound by residues 10–12 (TGG), Asn-126, Ser-200, Ile-255, and Gln-300.

It belongs to the glycosyltransferase 28 family. MurG subfamily.

It is found in the cell membrane. The catalysed reaction is Mur2Ac(oyl-L-Ala-gamma-D-Glu-L-Lys-D-Ala-D-Ala)-di-trans,octa-cis-undecaprenyl diphosphate + UDP-N-acetyl-alpha-D-glucosamine = beta-D-GlcNAc-(1-&gt;4)-Mur2Ac(oyl-L-Ala-gamma-D-Glu-L-Lys-D-Ala-D-Ala)-di-trans,octa-cis-undecaprenyl diphosphate + UDP + H(+). It functions in the pathway cell wall biogenesis; peptidoglycan biosynthesis. In terms of biological role, cell wall formation. Catalyzes the transfer of a GlcNAc subunit on undecaprenyl-pyrophosphoryl-MurNAc-pentapeptide (lipid intermediate I) to form undecaprenyl-pyrophosphoryl-MurNAc-(pentapeptide)GlcNAc (lipid intermediate II). The chain is UDP-N-acetylglucosamine--N-acetylmuramyl-(pentapeptide) pyrophosphoryl-undecaprenol N-acetylglucosamine transferase from Lactobacillus gasseri (strain ATCC 33323 / DSM 20243 / BCRC 14619 / CIP 102991 / JCM 1131 / KCTC 3163 / NCIMB 11718 / NCTC 13722 / AM63).